We begin with the raw amino-acid sequence, 324 residues long: Lactonase drp35 (324 aa).

E47, S109, G111, D129, T132, Y134, D137, N184, D235, and S236 together coordinate Ca(2+). D235 serves as the catalytic Proton donor.

It belongs to the SMP-30/CGR1 family. The cofactor is Ca(2+).

The protein resides in the cytoplasm. Functionally, exhibits lactonase activity. Acts in cells with perturbed membrane integrity and is possibly related to the membrane homeostasis. The sequence is that of Lactonase drp35 (drp35) from Staphylococcus aureus (strain USA300).